The primary structure comprises 660 residues: Bifunctional polymyxin resistance protein ArnA (660 aa).

The segment at 1-304 is formyltransferase ArnAFT; that stretch reads MKAVIFAYHD…TLGLVAGARL (304 aa). The active-site Proton donor; for formyltransferase activity is the histidine 104. (6R)-10-formyltetrahydrofolate is bound by residues arginine 114 and 136-140; that span reads VKRAD. The dehydrogenase ArnADH stretch occupies residues 314-660; the sequence is RRIRVLILGV…RSVDVAERAS (347 aa). Residues aspartate 347 and 368-369 each bind NAD(+); that span reads DI. Residues alanine 393, tyrosine 398, and 432–433 each bind UDP-alpha-D-glucuronate; that span reads TS. Glutamate 434 acts as the Proton acceptor; for decarboxylase activity in catalysis. UDP-alpha-D-glucuronate contacts are provided by residues arginine 460, asparagine 492, 526-535, and tyrosine 613; that span reads KLIDGGQQKR. Arginine 619 functions as the Proton donor; for decarboxylase activity in the catalytic mechanism.

This sequence in the N-terminal section; belongs to the Fmt family. UDP-L-Ara4N formyltransferase subfamily. The protein in the C-terminal section; belongs to the NAD(P)-dependent epimerase/dehydratase family. UDP-glucuronic acid decarboxylase subfamily. As to quaternary structure, homohexamer, formed by a dimer of trimers.

The catalysed reaction is UDP-alpha-D-glucuronate + NAD(+) = UDP-beta-L-threo-pentopyranos-4-ulose + CO2 + NADH. It catalyses the reaction UDP-4-amino-4-deoxy-beta-L-arabinose + (6R)-10-formyltetrahydrofolate = UDP-4-deoxy-4-formamido-beta-L-arabinose + (6S)-5,6,7,8-tetrahydrofolate + H(+). Its pathway is nucleotide-sugar biosynthesis; UDP-4-deoxy-4-formamido-beta-L-arabinose biosynthesis; UDP-4-deoxy-4-formamido-beta-L-arabinose from UDP-alpha-D-glucuronate: step 1/3. It functions in the pathway nucleotide-sugar biosynthesis; UDP-4-deoxy-4-formamido-beta-L-arabinose biosynthesis; UDP-4-deoxy-4-formamido-beta-L-arabinose from UDP-alpha-D-glucuronate: step 3/3. The protein operates within bacterial outer membrane biogenesis; lipopolysaccharide biosynthesis. Bifunctional enzyme that catalyzes the oxidative decarboxylation of UDP-glucuronic acid (UDP-GlcUA) to UDP-4-keto-arabinose (UDP-Ara4O) and the addition of a formyl group to UDP-4-amino-4-deoxy-L-arabinose (UDP-L-Ara4N) to form UDP-L-4-formamido-arabinose (UDP-L-Ara4FN). The modified arabinose is attached to lipid A and is required for resistance to polymyxin and cationic antimicrobial peptides. This is Bifunctional polymyxin resistance protein ArnA from Salmonella paratyphi C (strain RKS4594).